A 102-amino-acid polypeptide reads, in one-letter code: Secretoglobin family 1D member (102 aa).

An N-terminal signal peptide occupies residues 1–21 (MRLSVTALLVTLALCYYEANA). N-linked (GlcNAc...) asparagine glycosylation occurs at Asn87.

It belongs to the secretoglobin family. Lipophilin subfamily.

It localises to the secreted. May bind androgens and other steroids. May be under transcriptional regulation of steroid hormones. In Bos taurus (Bovine), this protein is Secretoglobin family 1D member (SCGB1D).